Reading from the N-terminus, the 342-residue chain is Fructose-1,6-bisphosphatase class 1 (342 aa).

Mg(2+) is bound by residues glutamate 91, aspartate 113, leucine 115, and aspartate 116. Substrate is bound by residues aspartate 116–serine 119, asparagine 211, and lysine 277. A Mg(2+)-binding site is contributed by glutamate 283.

This sequence belongs to the FBPase class 1 family. In terms of assembly, homotetramer. Requires Mg(2+) as cofactor.

The protein localises to the cytoplasm. The enzyme catalyses beta-D-fructose 1,6-bisphosphate + H2O = beta-D-fructose 6-phosphate + phosphate. It participates in carbohydrate biosynthesis; gluconeogenesis. In Bordetella petrii (strain ATCC BAA-461 / DSM 12804 / CCUG 43448), this protein is Fructose-1,6-bisphosphatase class 1.